Reading from the N-terminus, the 418-residue chain is Phosphoglycerate kinase (418 aa).

Residues 18-20 (DFN), arginine 34, 57-60 (HLGR), arginine 115, and arginine 171 contribute to the substrate site. ATP-binding positions include lysine 224, glycine 315, glutamate 346, and 375–378 (GGDS).

The protein belongs to the phosphoglycerate kinase family. As to quaternary structure, monomer.

Its subcellular location is the cytoplasm. It catalyses the reaction (2R)-3-phosphoglycerate + ATP = (2R)-3-phospho-glyceroyl phosphate + ADP. It participates in carbohydrate degradation; glycolysis; pyruvate from D-glyceraldehyde 3-phosphate: step 2/5. The protein is Phosphoglycerate kinase of Porphyromonas gingivalis (strain ATCC BAA-308 / W83).